Here is a 171-residue protein sequence, read N- to C-terminus: MPLLDSFTVDHTRMEAPAVRVAKTMNTPHGDAITVFDLRFCVPNKEVMPERGIHTLEHLFAGFMRNHLNGNGVEIIDISPMGCRTGFYMSLIGTPDEQRVADAWKAAMEDVLKVQDQNQIPELNVYQCGTYQMHSLQEAQDIARSILEREVRINSNEELALPKEKLQELHI.

The Fe cation site is built by H54, H58, and C128.

The protein belongs to the LuxS family. In terms of assembly, homodimer. Fe cation is required as a cofactor.

The enzyme catalyses S-(5-deoxy-D-ribos-5-yl)-L-homocysteine = (S)-4,5-dihydroxypentane-2,3-dione + L-homocysteine. In terms of biological role, involved in the synthesis of autoinducer 2 (AI-2) which is secreted by bacteria and is used to communicate both the cell density and the metabolic potential of the environment. The regulation of gene expression in response to changes in cell density is called quorum sensing. Catalyzes the transformation of S-ribosylhomocysteine (RHC) to homocysteine (HC) and 4,5-dihydroxy-2,3-pentadione (DPD). The chain is S-ribosylhomocysteine lyase from Shigella flexneri.